Reading from the N-terminus, the 262-residue chain is 5'-nucleotidase SurE (262 aa).

A divalent metal cation is bound by residues Asp8, Asp9, Ser39, and Asn91.

The protein belongs to the SurE nucleotidase family. A divalent metal cation is required as a cofactor.

It is found in the cytoplasm. The enzyme catalyses a ribonucleoside 5'-phosphate + H2O = a ribonucleoside + phosphate. Its function is as follows. Nucleotidase that shows phosphatase activity on nucleoside 5'-monophosphates. The polypeptide is 5'-nucleotidase SurE (Geobacter sulfurreducens (strain ATCC 51573 / DSM 12127 / PCA)).